The chain runs to 798 residues: Penicillin-binding protein 1A (798 aa).

The Cytoplasmic portion of the chain corresponds to 1–9 (MIKKIVTTC). A helical; Signal-anchor for type II membrane protein transmembrane segment spans residues 10-30 (FGLVLGLCVFGVGLVAIAILV). Residues 31-798 (TYPKLPSLDS…SKQPQLDSLF (768 aa)) lie on the Periplasmic side of the membrane. Residues 50-218 (LTIYSADGEV…SAYNPIVNPE (169 aa)) are transglycosylase. The active-site Proton donor; for transglycosylase activity is Glu-88. Residues 414–700 (VVVQEPLLQA…GTIAVPVWVD (287 aa)) are transpeptidase. Ser-461 serves as the catalytic Acyl-ester intermediate; for transpeptidase activity. The interval 751 to 798 (SRRIREDKEAGAEDVERGAADEVRQEVQETPVLPSNTGSKQPQLDSLF) is disordered. The segment covering 753 to 777 (RIREDKEAGAEDVERGAADEVRQEV) has biased composition (basic and acidic residues). Positions 783 to 798 (LPSNTGSKQPQLDSLF) are enriched in polar residues.

This sequence in the N-terminal section; belongs to the glycosyltransferase 51 family. In the C-terminal section; belongs to the transpeptidase family.

It localises to the cell inner membrane. The enzyme catalyses [GlcNAc-(1-&gt;4)-Mur2Ac(oyl-L-Ala-gamma-D-Glu-L-Lys-D-Ala-D-Ala)](n)-di-trans,octa-cis-undecaprenyl diphosphate + beta-D-GlcNAc-(1-&gt;4)-Mur2Ac(oyl-L-Ala-gamma-D-Glu-L-Lys-D-Ala-D-Ala)-di-trans,octa-cis-undecaprenyl diphosphate = [GlcNAc-(1-&gt;4)-Mur2Ac(oyl-L-Ala-gamma-D-Glu-L-Lys-D-Ala-D-Ala)](n+1)-di-trans,octa-cis-undecaprenyl diphosphate + di-trans,octa-cis-undecaprenyl diphosphate + H(+). It catalyses the reaction Preferential cleavage: (Ac)2-L-Lys-D-Ala-|-D-Ala. Also transpeptidation of peptidyl-alanyl moieties that are N-acyl substituents of D-alanine.. The protein operates within cell wall biogenesis; peptidoglycan biosynthesis. In terms of biological role, cell wall formation. Synthesis of cross-linked peptidoglycan from the lipid intermediates. The enzyme has a penicillin-insensitive transglycosylase N-terminal domain (formation of linear glycan strands) and a penicillin-sensitive transpeptidase C-terminal domain (cross-linking of the peptide subunits). This is Penicillin-binding protein 1A (mrcA) from Neisseria cinerea.